A 274-amino-acid chain; its full sequence is Hydroxyethylthiazole kinase (274 aa).

Methionine 51 contacts substrate. Arginine 127 and serine 173 together coordinate ATP. Glycine 200 contributes to the substrate binding site.

It belongs to the Thz kinase family. Mg(2+) serves as cofactor.

It carries out the reaction 5-(2-hydroxyethyl)-4-methylthiazole + ATP = 4-methyl-5-(2-phosphooxyethyl)-thiazole + ADP + H(+). It participates in cofactor biosynthesis; thiamine diphosphate biosynthesis; 4-methyl-5-(2-phosphoethyl)-thiazole from 5-(2-hydroxyethyl)-4-methylthiazole: step 1/1. Catalyzes the phosphorylation of the hydroxyl group of 4-methyl-5-beta-hydroxyethylthiazole (THZ). The polypeptide is Hydroxyethylthiazole kinase (Photobacterium profundum (strain SS9)).